A 462-amino-acid polypeptide reads, in one-letter code: 3-isopropylmalate dehydratase large subunit (462 aa).

Residues C337, C397, and C400 each coordinate [4Fe-4S] cluster.

The protein belongs to the aconitase/IPM isomerase family. LeuC type 1 subfamily. As to quaternary structure, heterodimer of LeuC and LeuD. [4Fe-4S] cluster serves as cofactor.

It catalyses the reaction (2R,3S)-3-isopropylmalate = (2S)-2-isopropylmalate. It participates in amino-acid biosynthesis; L-leucine biosynthesis; L-leucine from 3-methyl-2-oxobutanoate: step 2/4. In terms of biological role, catalyzes the isomerization between 2-isopropylmalate and 3-isopropylmalate, via the formation of 2-isopropylmaleate. The chain is 3-isopropylmalate dehydratase large subunit from Listeria welshimeri serovar 6b (strain ATCC 35897 / DSM 20650 / CCUG 15529 / CIP 8149 / NCTC 11857 / SLCC 5334 / V8).